We begin with the raw amino-acid sequence, 184 residues long: dCTP deaminase (184 aa).

Residues K107–R112, T131–E133, Q152, Y166, and Q176 each bind dCTP. Residue E133 is the Proton donor/acceptor of the active site.

Belongs to the dCTP deaminase family. In terms of assembly, homotrimer.

The enzyme catalyses dCTP + H2O + H(+) = dUTP + NH4(+). It participates in pyrimidine metabolism; dUMP biosynthesis; dUMP from dCTP (dUTP route): step 1/2. Catalyzes the deamination of dCTP to dUTP. In Rhodospirillum centenum (strain ATCC 51521 / SW), this protein is dCTP deaminase.